Consider the following 760-residue polypeptide: Phosphoribosylformylglycinamidine synthase subunit PurL (760 aa).

The disordered stretch occupies residues 1-25 (MNMSLPADRDTAKKPSAQKPSAHAQ). His69 is a catalytic residue. 2 residues coordinate ATP: Tyr72 and Lys115. Glu117 provides a ligand contact to Mg(2+). Residues 118–121 (SHNH) and Arg140 each bind substrate. The Proton acceptor role is filled by His119. Asp141 is a Mg(2+) binding site. Residue Gln265 coordinates substrate. Residue Asp293 coordinates Mg(2+). Position 337-339 (337-339 (ESQ)) interacts with substrate. Positions 519 and 556 each coordinate ATP. Asn557 is a Mg(2+) binding site. Residue Ser559 coordinates substrate.

The protein belongs to the FGAMS family. As to quaternary structure, monomer. Part of the FGAM synthase complex composed of 1 PurL, 1 PurQ and 2 PurS subunits.

It localises to the cytoplasm. The catalysed reaction is N(2)-formyl-N(1)-(5-phospho-beta-D-ribosyl)glycinamide + L-glutamine + ATP + H2O = 2-formamido-N(1)-(5-O-phospho-beta-D-ribosyl)acetamidine + L-glutamate + ADP + phosphate + H(+). It functions in the pathway purine metabolism; IMP biosynthesis via de novo pathway; 5-amino-1-(5-phospho-D-ribosyl)imidazole from N(2)-formyl-N(1)-(5-phospho-D-ribosyl)glycinamide: step 1/2. Part of the phosphoribosylformylglycinamidine synthase complex involved in the purines biosynthetic pathway. Catalyzes the ATP-dependent conversion of formylglycinamide ribonucleotide (FGAR) and glutamine to yield formylglycinamidine ribonucleotide (FGAM) and glutamate. The FGAM synthase complex is composed of three subunits. PurQ produces an ammonia molecule by converting glutamine to glutamate. PurL transfers the ammonia molecule to FGAR to form FGAM in an ATP-dependent manner. PurS interacts with PurQ and PurL and is thought to assist in the transfer of the ammonia molecule from PurQ to PurL. This is Phosphoribosylformylglycinamidine synthase subunit PurL from Tropheryma whipplei (strain TW08/27) (Whipple's bacillus).